A 430-amino-acid chain; its full sequence is Bystin (430 aa).

Composition is skewed to basic residues over residues methionine 1–glycine 12 and proline 26–glutamate 35. Disordered stretches follow at residues methionine 1–valine 45 and methionine 65–tyrosine 113. Residues tyrosine 68 to threonine 78 are compositionally biased toward basic and acidic residues. Acidic residues predominate over residues arginine 93–aspartate 104.

It belongs to the bystin family.

The protein resides in the nucleus. It is found in the nucleolus. In terms of biological role, required for processing of 20S pre-rRNA precursor and biogenesis of 40S ribosomal subunits. This is Bystin (bysl) from Nematostella vectensis (Starlet sea anemone).